The chain runs to 644 residues: Chaperone protein DnaK (644 aa).

A Phosphothreonine; by autocatalysis modification is found at threonine 199. The tract at residues 602–644 is disordered; it reads LYAEQSAQQQGSAGATGGEQPKADKAADDGVVDAEFEEVKDDK. Residues 604 to 614 show a composition bias toward low complexity; that stretch reads AEQSAQQQGSA. Positions 631–644 are enriched in acidic residues; that stretch reads GVVDAEFEEVKDDK.

The protein belongs to the heat shock protein 70 family.

Acts as a chaperone. The sequence is that of Chaperone protein DnaK from Teredinibacter turnerae (strain ATCC 39867 / T7901).